The chain runs to 488 residues: Histone deacetylase 2 (488 aa).

A histone deacetylase region spans residues 9-322 (KKKVCYYYDG…WTYETAVALD (314 aa)). 2 residues coordinate 1D-myo-inositol 1,4,5,6-tetrakisphosphate: G28 and K32. K75 bears the N6-acetyllysine; alternate mark. K75 is covalently cross-linked (Glycyl lysine isopeptide (Lys-Gly) (interchain with G-Cter in SUMO2); alternate). H142 is an active-site residue. The Ca(2+) site is built by D175, D177, H179, F188, T191, V194, S198, and F199. Residues D177 and H179 each contribute to the Zn(2+) site. At K221 the chain carries N6-acetyllysine. Y223 is a Ca(2+) binding site. Residue C262 is modified to S-nitrosocysteine. Position 265 (D265) interacts with Zn(2+). Residue R271 coordinates 1D-myo-inositol 1,4,5,6-tetrakisphosphate. An S-nitrosocysteine modification is found at C274. The tract at residues 389 to 488 (AVHEDSGDED…GTKSEQLSNP (100 aa)) is disordered. Residues S394, S407, S422, and S424 each carry the phosphoserine modification. Positions 402–417 (PDKRISIRASDKRIAC) are enriched in basic and acidic residues. Acidic residues predominate over residues 418–428 (DEEFSDSEDEG). A compositionally biased stretch (basic and acidic residues) spans 429-481 (EGGRRNVADHKKGAKKARIEEDKKETEDKKTDVKEEDKSKDNSGEKTDTKGTK). Glycyl lysine isopeptide (Lys-Gly) (interchain with G-Cter in SUMO2) cross-links involve residues K439, K452, K458, K462, K478, and K481.

This sequence belongs to the histone deacetylase family. HD type 1 subfamily. Part of the core histone deacetylase (HDAC) complex composed of HDAC1, HDAC2, RBBP4 and RBBP7, the core complex associates with SIN3, SAP18 and SAP30 to form the SIN3 HDAC complex. Component of the nucleosome remodeling and deacetylase (NuRD) repressor complex, composed of core proteins MTA1, MTA2, MTA3, RBBP4, RBBP7, HDAC1, HDAC2, MBD2, MBD3, and peripherally associated proteins CDK2AP1, CDK2AP2, GATAD2A, GATAD2B, CHD3, CHD4 and CHD5. The exact stoichiometry of the NuRD complex is unknown, and some subunits such as MBD2 and MBD3, GATAD2A and GATAD2B, and CHD3, CHD4 and CHD5 define mutually exclusive NuRD complexes. Component of a RCOR/GFI/KDM1A/HDAC complex. Component of a BHC histone deacetylase complex that contains HDAC1, HDAC2, HMG20B, KDM1A, RCOR1 and PHF21A. The BHC complex may also contain ZMYM2, ZNF217, ZMYM3, GSE1 and GTF2I. Part of a complex containing the core histones H2A, H2B, H3 and H4, DEK and unphosphorylated DAXX. Part of a complex containing ATR and CHD4. Forms a heterologous complex at least with YY1. Interacts in the late S-phase of DNA-replication with DNMT1 in the other transcriptional repressor complex composed of DNMT1, DMAP1, PCNA, CAF1. Component of a mSin3A corepressor complex that contains SIN3A, SAP130, SUDS3, ARID4B, HDAC1 and HDAC2. Part of a complex composed of TRIM28, HDAC1, HDAC2 and EHMT2. Part of a complex containing at least CDYL, MIER1, MIER2, HDAC1 and HDAC2. Component of a histone deacetylase complex containing DNTTIP1, ZNF541, HDAC1 and HDAC2. Forms a complex comprising APPL1, RUVBL2, APPL2, CTNNB1 and HDAC1. Interacts directly with GFI1. Interacts directly with GFI1B. Interacts with APEX1; the interaction is not dependent on the acetylated status of APEX1. Interacts with ATR. Interacts with BCL6 (non-acetylated form). Interacts with BEND3. Interacts with CBFA2T3. Interacts with CDK2AP1. Interacts with CHD4. Interacts with CHD5. Interacts with CHFR. Interacts with CRY1. Interacts with DNMT1. Interacts with GATAD2A. Interacts with HCFC1. Interacts with HDAC7. Interacts with HDAC10. Interacts with INSM1. Interacts with KDM4A. Interacts with MACROH2A1 (via the non-histone region). Interacts with MBD3L2. Interacts with MTA1, with a preference for sumoylated MTA1. Interacts with NACC2. Interacts with NRIP1. Interacts with PELP1. Interacts with PIMREG. Interacts with PRDM6. Interacts with PWWP2B. Interacts with SAP30. Interacts with SAP30L. Interacts with SETDB1. Interacts with SIX3. Interacts with SMARCAD1. Interacts with SNW1. Interacts with SPHK2. Interacts with SPEN/MINT. Interacts (CK2 phosphorylated form) with SP3. Interacts with SUV39H1. Interacts with TSHZ3 (via its N-terminus). Interacts with ZMYND8. Interacts with ZNF431. Interacts with ZNF263; recruited to the SIX3 promoter along with other proteins involved in chromatin modification and transcriptional corepression where it contributes to transcriptional repression. Identified in a complex with HDAC1, KCTD19, DNTTIP1 and ZNF541. Component of the SIN3B complex, which includes SIN3B, HDAC2, PHF12 and MORF4L1; interacts directly with all subunits. Requires Zn(2+) as cofactor. It depends on Ca(2+) as a cofactor. Post-translationally, S-nitrosylated by GAPDH. In neurons, S-nitrosylation at Cys-262 and Cys-274 does not affect enzyme activity, but induces HDAC2 release from chromatin. This in turn increases acetylation of histones surrounding neurotrophin-dependent gene promoters and promotes their transcription. In embryonic cortical neurons, S-Nitrosylation regulates dendritic growth and branching. In terms of tissue distribution, widely expressed; lower levels in brain and lung.

The protein localises to the nucleus. Its subcellular location is the cytoplasm. It catalyses the reaction N(6)-acetyl-L-lysyl-[histone] + H2O = L-lysyl-[histone] + acetate. It carries out the reaction N(6)-acetyl-L-lysyl-[protein] + H2O = L-lysyl-[protein] + acetate. The catalysed reaction is N(6)-(2E)-butenoyl-L-lysyl-[protein] + H2O = (2E)-2-butenoate + L-lysyl-[protein]. The enzyme catalyses N(6)-(2-hydroxyisobutanoyl)-L-lysyl-[protein] + H2O = 2-hydroxy-2-methylpropanoate + L-lysyl-[protein]. It catalyses the reaction N(6)-[(S)-lactoyl]-L-lysyl-[protein] + H2O = (S)-lactate + L-lysyl-[protein]. With respect to regulation, inositol tetraphosphate (1D-myo-inositol 1,4,5,6-tetrakisphosphate) may act as an intermolecular glue between HDAC2 and N-Cor repressor complex components. Histone deacetylase that catalyzes the deacetylation of lysine residues on the N-terminal part of the core histones (H2A, H2B, H3 and H4). Histone deacetylation gives a tag for epigenetic repression and plays an important role in transcriptional regulation, cell cycle progression and developmental events. Histone deacetylases act via the formation of large multiprotein complexes. Forms transcriptional repressor complexes by associating with MAD, SIN3, YY1 and N-COR. Component of a RCOR/GFI/KDM1A/HDAC complex that suppresses, via histone deacetylase (HDAC) recruitment, a number of genes implicated in multilineage blood cell development. Acts as a component of the histone deacetylase NuRD complex which participates in the remodeling of chromatin. Component of the SIN3B complex that represses transcription and counteracts the histone acetyltransferase activity of EP300 through the recognition H3K27ac marks by PHF12 and the activity of the histone deacetylase HDAC2. Also deacetylates non-histone targets: deacetylates TSHZ3, thereby regulating its transcriptional repressor activity. May be involved in the transcriptional repression of circadian target genes, such as PER1, mediated by CRY1 through histone deacetylation. Involved in MTA1-mediated transcriptional corepression of TFF1 and CDKN1A. In addition to protein deacetylase activity, also acts as a protein-lysine deacylase by recognizing other acyl groups: catalyzes removal of (2E)-butenoyl (crotonyl), lactoyl (lactyl) and 2-hydroxyisobutanoyl (2-hydroxyisobutyryl) acyl groups from lysine residues, leading to protein decrotonylation, delactylation and de-2-hydroxyisobutyrylation, respectively. The chain is Histone deacetylase 2 from Homo sapiens (Human).